The sequence spans 315 residues: Transcriptional regulator protein Pur-beta (315 aa).

Positions 1–39 are disordered; sequence MADGDSGSERGGGGPGSFQPAPRGGGGPGGEQETQELAS. Ala2 carries the post-translational modification N-acetylalanine. Phosphoserine occurs at positions 6 and 8. Arg23 is subject to Omega-N-methylarginine. The tract at residues 28-254 is DNA-binding; it reads PGGEQETQEL…GVFLRVSEVK (227 aa). Thr34 carries the phosphothreonine modification. A Phosphoserine modification is found at Ser104. Arg155 bears the Omega-N-methylarginine mark. Positions 200-220 are disordered; sequence DDELAGGPGGGAGGPGGGLYG. Positions 205–219 are enriched in gly residues; it reads GGPGGGAGGPGGGLY. Lys270 is modified (N6-acetyllysine). Basic and acidic residues predominate over residues 288-298; that stretch reads RQRDKLYERRG. A disordered region spans residues 288–315; sequence RQRDKLYERRGGGSGGGDESEGEEVDED. Arg297 is subject to Omega-N-methylarginine. Ser301 and Ser307 each carry phosphoserine. A compositionally biased stretch (acidic residues) spans 305-315; that stretch reads DESEGEEVDED.

Belongs to the PUR DNA-binding protein family. In terms of assembly, homodimer, heterodimer with PURA and heterotrimer with PURA and YBX1/Y-box protein 1. Interacts with MYOCD and SRF. As to expression, expressed in muscle cells and in the liver.

The protein resides in the nucleus. Functionally, transcriptional regulator which can act as an activator or a repressor. Represses the transcription of ACTA2 in fibroblasts and smooth muscle cells via its ability to interact with the purine-rich strand of a MCAT- containing element in the 5' flanking region of the gene. Represses the transcription of MYOCD, capable of repressing all isoforms of MYOCD but the magnitude of the repressive effects is most notable for the SMC- specific isoforms. Promotes hepatic glucose production by activating the transcription of ADCY6, leading to cAMP accumulation, increased PKA activity, CREB activation, and increased transcription of PCK1 and G6PC genes. Has capacity to bind repeated elements in single-stranded DNA such as the purine-rich single strand of the PUR element located upstream of the MYC gene. Participates in transcriptional and translational regulation of alpha-MHC expression in cardiac myocytes by binding to the purine-rich negative regulatory (PNR) element. Modulates constitutive liver galectin-3 gene transcription by binding to its promoter. May play a role in the dendritic transport of a subset of mRNAs. This is Transcriptional regulator protein Pur-beta (Purb) from Rattus norvegicus (Rat).